Here is a 504-residue protein sequence, read N- to C-terminus: Hydroxyisobutyraldehyde dehydrogenase (504 aa).

The Proton acceptor role is filled by glutamate 260. The active-site Nucleophile is the cysteine 294.

It belongs to the aldehyde dehydrogenase family.

It localises to the cytoplasm. The catalysed reaction is 2-hydroxy-2-methylpropanal + NAD(+) + H2O = 2-hydroxy-2-methylpropanoate + NADH + 2 H(+). Involved in the degradation of methyl tert-butyl ether (MTBE). Catalyzes the conversion of hydroxyisobutyraldehyde to hydroxyisobutyric acid (HIBA). This is Hydroxyisobutyraldehyde dehydrogenase from Mycolicibacterium austroafricanum (Mycobacterium austroafricanum).